The following is a 155-amino-acid chain: Endoribonuclease YbeY (155 aa).

Residues 64-84 (SFPMDEMRAPGDDEDPPSGLL) are disordered. Residues histidine 115, histidine 119, and histidine 125 each contribute to the Zn(2+) site.

This sequence belongs to the endoribonuclease YbeY family. Requires Zn(2+) as cofactor.

Its subcellular location is the cytoplasm. Its function is as follows. Single strand-specific metallo-endoribonuclease involved in late-stage 70S ribosome quality control and in maturation of the 3' terminus of the 16S rRNA. The polypeptide is Endoribonuclease YbeY (Cutibacterium acnes (strain DSM 16379 / KPA171202) (Propionibacterium acnes)).